The following is a 742-amino-acid chain: Alcohol dehydrogenase (quinone), dehydrogenase subunit (742 aa).

An N-terminal signal peptide occupies residues 1–35 (MTRPASAKRRSLLGILAAGTICAAALPYAAVPARA). E96 contacts pyrroloquinoline quinone. Residues C142 and C143 are joined by a disulfide bond. R148 provides a ligand contact to pyrroloquinoline quinone. Residue E216 coordinates Ca(2+). T278 is a binding site for pyrroloquinoline quinone. Residues N298 and D343 each coordinate Ca(2+). The active-site Proton acceptor is D343. Pyrroloquinoline quinone is bound by residues K370 and I584. The region spanning 636–715 (KVVDNGYFQY…AIRQYLIKRA (80 aa)) is the Cytochrome c domain. The heme c site is built by C649, C652, H653, and M692. Over residues 722 to 732 (EVDARKNDKNI) the composition is skewed to basic and acidic residues. Positions 722–742 (EVDARKNDKNIPENPTLGINP) are disordered.

It belongs to the bacterial PQQ dehydrogenase family. The alcohol dehydrogenase multicomponent enzyme system is composed of a dehydrogenase subunit I (AdhA) and a cytochrome c subunit II (AdhB). Requires pyrroloquinoline quinone as cofactor. It depends on Ca(2+) as a cofactor. Heme c is required as a cofactor.

Its subcellular location is the cell membrane. The catalysed reaction is ethanol + a ubiquinone = a ubiquinol + acetaldehyde. Functionally, dehydrogenase component of the alcohol dehydrogenase multicomponent enzyme system which is involved in the production of acetic acid and in the ethanol oxidase respiratory chain. Quinohemoprotein alcohol dehydrogenase (ADH) catalyzes the oxidation of ethanol to acetaldehyde by transferring electrons to the ubiquinone embedded in the membrane phospholipids. The electrons transfer from ethanol to membranous ubiquinone occurs from pyrroloquinoline quinone (PQQ) to one heme c in subunit I (AdhA), and finally to two heme c in subunit II (AdhB). Besides ubiquinone reduction, ADH also has a ubiquinol (QH2) oxidation reaction which mediates electron transfer from ubiquinol to the non-energy generating bypass oxidase system. The electrons transfer occurs from ubiquinol (QH2) to the additional heme c within subunit II (AdhB). This Acetobacter aceti protein is Alcohol dehydrogenase (quinone), dehydrogenase subunit.